Reading from the N-terminus, the 399-residue chain is Elongation factor Tu 1 (399 aa).

Positions 10 to 209 (KPHVNIGTIG…QVDTYIPEPE (200 aa)) constitute a tr-type G domain. The segment at 19–26 (GHVDHGKT) is G1. Residue 19–26 (GHVDHGKT) participates in GTP binding. Residue threonine 26 coordinates Mg(2+). The segment at 60–64 (GITIA) is G2. The segment at 81 to 84 (DCPG) is G3. GTP is bound by residues 81–85 (DCPGH) and 136–139 (NKAD). Residues 136–139 (NKAD) form a G4 region. The segment at 174-176 (SAL) is G5.

It belongs to the TRAFAC class translation factor GTPase superfamily. Classic translation factor GTPase family. EF-Tu/EF-1A subfamily. In terms of assembly, monomer.

Its subcellular location is the cytoplasm. The catalysed reaction is GTP + H2O = GDP + phosphate + H(+). Its function is as follows. GTP hydrolase that promotes the GTP-dependent binding of aminoacyl-tRNA to the A-site of ribosomes during protein biosynthesis. This chain is Elongation factor Tu 1, found in Syntrophotalea carbinolica (strain DSM 2380 / NBRC 103641 / GraBd1) (Pelobacter carbinolicus).